We begin with the raw amino-acid sequence, 749 residues long: NAD(P)H-quinone oxidoreductase subunit 5, chloroplastic (749 aa).

Helical transmembrane passes span 9–29 (WIIP…LLLF), 40–60 (WSFT…NLSI), 89–109 (IDPL…MVLI), 125–145 (FAYM…SNLI), 147–167 (IYIF…FWFT), 185–205 (GDFG…SFEF), 221–241 (NGTN…GAVA), 260–280 (TPIS…FLVA), 285–305 (LFIV…ITIL), 329–349 (LGYT…FHLI), 356–376 (ALLF…VGYS), 398–418 (NTFL…CFWS), 427–447 (WLYS…TAFY), 553–573 (LFPL…GIPF), 607–627 (FVIN…LASL), and 727–747 (SYLF…YFFL).

It belongs to the complex I subunit 5 family. NDH is composed of at least 16 different subunits, 5 of which are encoded in the nucleus.

The protein resides in the plastid. It is found in the chloroplast thylakoid membrane. The enzyme catalyses a plastoquinone + NADH + (n+1) H(+)(in) = a plastoquinol + NAD(+) + n H(+)(out). The catalysed reaction is a plastoquinone + NADPH + (n+1) H(+)(in) = a plastoquinol + NADP(+) + n H(+)(out). NDH shuttles electrons from NAD(P)H:plastoquinone, via FMN and iron-sulfur (Fe-S) centers, to quinones in the photosynthetic chain and possibly in a chloroplast respiratory chain. The immediate electron acceptor for the enzyme in this species is believed to be plastoquinone. Couples the redox reaction to proton translocation, and thus conserves the redox energy in a proton gradient. The protein is NAD(P)H-quinone oxidoreductase subunit 5, chloroplastic (ndhF) of Vitis vinifera (Grape).